We begin with the raw amino-acid sequence, 219 residues long: Probable transaldolase (219 aa).

Lysine 83 (schiff-base intermediate with substrate) is an active-site residue.

It belongs to the transaldolase family. Type 3B subfamily.

The protein localises to the cytoplasm. The catalysed reaction is D-sedoheptulose 7-phosphate + D-glyceraldehyde 3-phosphate = D-erythrose 4-phosphate + beta-D-fructose 6-phosphate. Its pathway is carbohydrate degradation; pentose phosphate pathway; D-glyceraldehyde 3-phosphate and beta-D-fructose 6-phosphate from D-ribose 5-phosphate and D-xylulose 5-phosphate (non-oxidative stage): step 2/3. Functionally, transaldolase is important for the balance of metabolites in the pentose-phosphate pathway. The protein is Probable transaldolase of Cereibacter sphaeroides (strain ATCC 17029 / ATH 2.4.9) (Rhodobacter sphaeroides).